Consider the following 186-residue polypeptide: Low amplitude and bright protein LabA (186 aa).

Functionally, functions in an output pathway of the circadian clock. One of three clock output pathways. Involved in negative feedback regulation of KaiC; deletion leads to overexpression of KaiC protein and decreases the amplitude of the circadian response. Overexpression reduces the expression of circadian genes. In Synechococcus elongatus (strain ATCC 33912 / PCC 7942 / FACHB-805) (Anacystis nidulans R2), this protein is Low amplitude and bright protein LabA.